The sequence spans 710 residues: Nucleolin (710 aa).

A disordered region spans residues 1-303 (MVKLAKAGKN…KKQKVEGTEP (303 aa)). N6-acetyllysine occurs at positions 9, 15, and 16. Acidic residues predominate over residues 24–43 (VEEDSEDEEMSEDEEDDSSG). A phosphoserine mark is found at S28, S34, S41, and S42. Low complexity predominate over residues 56–107 (AAATSAKKVVVSPTKKVAVATPAKKAAVTPGKKAAATPAKKTVTPAKAVTTP). Repeat 1 spans residues 58–65 (ATSAKKVV). The interval 58–135 (ATSAKKVVVS…GAAIPAKGAK (78 aa)) is 8 X 8 AA tandem repeats of X-T-P-X-K-K-X-X. S67 bears the Phosphoserine mark. A phosphothreonine mark is found at T69, T76, T84, and T92. Repeat copies occupy residues 75–82 (ATPAKKAA), 83–90 (VTPGKKAA), and 91–98 (ATPAKKTV). K96 is subject to N6-acetyllysine. At T99 the chain carries Phosphothreonine. The stretch at 99 to 104 (TPAKAV) is one 5; truncated repeat. Position 102 is an N6-acetyllysine (K102). Repeat unit 6 spans residues 105 to 112 (TTPGKKGA). Position 106 is a phosphothreonine (T106). K109 bears the N6-acetyllysine mark. A Phosphothreonine modification is found at T113. Residue K116 is modified to N6-acetyllysine. 2 consecutive repeat copies span residues 120–127 (ATPGKKGA) and 128–135 (AIPAKGAK). The residue at position 121 (T121) is a Phosphothreonine. Residues 122 to 137 (PGKKGAAIPAKGAKNG) are compositionally biased toward low complexity. The residue at position 124 (K124) is an N6-acetyllysine. Phosphoserine occurs at positions 145 and 153. A compositionally biased stretch (acidic residues) spans 145-171 (SDEEEDDDSEEDEEDDEDEDEDEDEIE). Low complexity predominate over residues 172-183 (PAAMKAAAAAPA). Phosphoserine is present on residues S184 and S206. A compositionally biased stretch (acidic residues) spans 184-211 (SEDEDDEDDEDDEDDDDDEEDDSEEEAM). At T214 the chain carries Phosphothreonine. Residues 234-272 (EDEDEEEDDEDEDDDDDEDDEDDDDEDDEEEEEEEEEEP) show a composition bias toward acidic residues. Basic and acidic residues predominate over residues 273 to 300 (VKEAPGKRKKEMAKQKAAPEAKKQKVEG). K297 participates in a covalent cross-link: Glycyl lysine isopeptide (Lys-Gly) (interchain with G-Cter in SUMO1); alternate. Residue K297 forms a Glycyl lysine isopeptide (Lys-Gly) (interchain with G-Cter in SUMO2); alternate linkage. The residue at position 301 (T301) is a Phosphothreonine. 2 consecutive RRM domains span residues 307–383 (FNLF…KPKG) and 393–466 (RTLL…YTGE). K318 carries the N6-acetyllysine modification. A Glycyl lysine isopeptide (Lys-Gly) (interchain with G-Cter in SUMO1); alternate cross-link involves residue K324. K324 participates in a covalent cross-link: Glycyl lysine isopeptide (Lys-Gly) (interchain with G-Cter in SUMO2); alternate. An N6-acetyllysine modification is found at K348. At S356 the chain carries Phosphoserine. T367 carries the post-translational modification Phosphothreonine. K370 is covalently cross-linked (Glycyl lysine isopeptide (Lys-Gly) (interchain with G-Cter in SUMO2)). K377 is covalently cross-linked (Glycyl lysine isopeptide (Lys-Gly) (interchain with G-Cter in SUMO2); alternate). Position 377 is an N6-acetyllysine; alternate (K377). 2 positions are modified to N6-acetyllysine: K398 and K403. A Phosphothreonine modification is found at T405. N6-acetyllysine occurs at positions 427 and 444. S458 and S460 each carry phosphoserine. K467 and K477 each carry N6-acetyllysine. The RRM 3 domain occupies 486–560 (KTLVLSNLSY…RAIRLELQGP (75 aa)). A Glycyl lysine isopeptide (Lys-Gly) (interchain with G-Cter in SUMO2); alternate cross-link involves residue K513. At K513 the chain carries N6-acetyllysine; alternate. K521 carries the post-translational modification N6-acetyllysine. S563 is subject to Phosphoserine. K572 is modified (N6-acetyllysine). Positions 572 to 647 (KTLFVKGLSE…NKVTLDWAKP (76 aa)) constitute an RRM 4 domain. Residue K577 forms a Glycyl lysine isopeptide (Lys-Gly) (interchain with G-Cter in SUMO2); alternate linkage. K577 is subject to N6-acetyllysine; alternate. A Phosphoserine modification is found at S580. A Glycyl lysine isopeptide (Lys-Gly) (interchain with G-Cter in SUMO1); alternate cross-link involves residue K589. K589 participates in a covalent cross-link: Glycyl lysine isopeptide (Lys-Gly) (interchain with G-Cter in SUMO2); alternate. 2 positions are modified to phosphoserine: S591 and S619. K624 is covalently cross-linked (Glycyl lysine isopeptide (Lys-Gly) (interchain with G-Cter in SUMO2)). The tract at residues 640–710 (VTLDWAKPKG…KPQGKKTKFE (71 aa)) is disordered. The residue at position 646 (K646) is an N6-acetyllysine. Over residues 650-696 (EGGFGGRGGGRGGFGGRGGGRGGRGGFGGRGRGGFGGRGGFRGGRGG) the composition is skewed to gly residues. R656, R660, R666, R670, R673, R679, R681, R687, and R691 each carry asymmetric dimethylarginine. An Asymmetric dimethylarginine; alternate modification is found at R694. R694 carries the post-translational modification Omega-N-methylarginine; alternate. Residues 697–710 (GGDHKPQGKKTKFE) are compositionally biased toward basic and acidic residues.

As to quaternary structure, identified in a IGF2BP1-dependent mRNP granule complex containing untranslated mRNAs. Component of the SWAP complex that consists of NPM1, NCL/nucleolin, PARP1 and SWAP70. Component of a complex which is at least composed of HTATSF1/Tat-SF1, the P-TEFb complex components CDK9 and CCNT1, RNA polymerase II, SUPT5H, and NCL/nucleolin. Interacts with AICDA. Interacts with APTX. Interacts with C1QBP. Interacts with ERBB4. Interacts (via C-terminus) with FMR1 isoform 6 (via N-terminus). Interacts with GZF1; this interaction is important for nucleolar localization of GZF1. Interacts with NSUN2. Interacts with NVL. Interacts (via N-terminus domain) with SETX. Interacts (via RRM1 and C-terminal RRM4/Arg/Gly-rich domains) with TERT; the interaction is important for nucleolar localization of TERT. Interacts with WDR46. Interacts with ZFP36. Interacts with LRRC34. Interacts with RRP1B. Interacts with HNRNPU; this interaction occurs during mitosis. Interacts with RIOK1; RIOK1 recruits NCL to PRMT5 for symmetrically methylation. Interacts with ZBTB7B. Interacts with MDK; this interaction promotes NCL clustering and lateral movements of this complex into lipid rafts leading to MDK internalization. Interacts with HDGF (isoform 1). Interacts with ALKBH2. Interacts with IGFBP5; this interaction is necessary for IGFBP5 localization to the nucleus. Interacts with DDX24 (when ubiquitinated); this interaction may be important during ribosome biogenesis. In terms of processing, some glutamate residues are glycylated by TTLL8. This modification occurs exclusively on glutamate residues and results in a glycine chain on the gamma-carboxyl group. Post-translationally, symmetrically methylated by PRMT5.

It localises to the nucleus. It is found in the nucleolus. The protein resides in the cytoplasm. Functionally, nucleolin is the major nucleolar protein of growing eukaryotic cells. It is found associated with intranucleolar chromatin and pre-ribosomal particles. It induces chromatin decondensation by binding to histone H1. It is thought to play a role in pre-rRNA transcription and ribosome assembly. May play a role in the process of transcriptional elongation. Binds RNA oligonucleotides with 5'-UUAGGG-3' repeats more tightly than the telomeric single-stranded DNA 5'-TTAGGG-3' repeats. This Homo sapiens (Human) protein is Nucleolin (NCL).